A 507-amino-acid chain; its full sequence is Flagellar hook-associated protein 1 (507 aa).

Belongs to the flagella basal body rod proteins family.

Its subcellular location is the secreted. It localises to the bacterial flagellum. The sequence is that of Flagellar hook-associated protein 1 (flgK) from Bacillus subtilis (strain 168).